We begin with the raw amino-acid sequence, 553 residues long: Protein PNS1 (553 aa).

Residues 1–17 (MYGKSGPPPEGYVPQHP) are compositionally biased toward pro residues. The interval 1-49 (MYGKSGPPPEGYVPQHPPAQGYAPHNPPPGYVHENPFQEPVPQGQEYSP) is disordered. Over 1–95 (MYGKSGPPPE…AGNRLKFNDW (95 aa)) the chain is Cytoplasmic. Residues 96–116 (PFTIIFLLTVGAFIAVAVLTL) traverse the membrane as a helical segment. Residues 117–143 (RGWSLSPTSNGSGIYDGDNTHTLNTNA) are Extracellular-facing. An N-linked (GlcNAc...) asparagine glycan is attached at Asn126. Residues 144–164 (AILLLISCGVAVALSVFGLVL) traverse the membrane as a helical segment. The Cytoplasmic portion of the chain corresponds to 165-170 (AGMYTK). A helical transmembrane segment spans residues 171 to 191 (FFIYAAMILNTVVGLGTAITY). Over 192–196 (LVLRH) the chain is Extracellular. A helical membrane pass occupies residues 197–217 (WSAGIVFMIFTILTAVCYWLM). The Cytoplasmic portion of the chain corresponds to 218–243 (RSRIPFSVAVLRTVMSVMKKHPQTWL). A helical transmembrane segment spans residues 244-264 (VSLLGTIVSAAFSVIFSVVLV). At 265-288 (ATYIKYDPKSENGGCDVSGGSCSR) the chain is on the extracellular side. Residues 289–309 (GKLIGILVLVFFCGFYISEVI) form a helical membrane-spanning segment. Residues 310–346 (RNVIHCTIAGIYGCWYYFSKSDQGMPRWPAFGSLKRA) are Cytoplasmic-facing. A helical transmembrane segment spans residues 347 to 367 (LTTSFGSICFGSLIVSLIQLL). At 368 to 385 (RQIIQLLRNGIISGISDS) the chain is on the extracellular side. Residues 386–406 (GWMQCLWLILDAVVGVFEWMA) form a helical membrane-spanning segment. The Cytoplasmic portion of the chain corresponds to 407–450 (EYFNHYAYCFIALYGKPYLRAAKETWHMLREKGIDALINDNLIN). A helical transmembrane segment spans residues 451 to 471 (LALGFYTLFVGYTTALFSYLF). At 472-483 (LRFTKPDYNSGG) the chain is on the extracellular side. The chain crosses the membrane as a helical span at residues 484–504 (GFNAVLMAFSFLIAIQLTHVA). Residues 505 to 553 (TETIRSGTATFFVALGNDPEIFRVSYPQRFDEIFRAYPDVLNKLSHQHV) are Cytoplasmic-facing.

Belongs to the CTL (choline transporter-like) family.

The protein resides in the cell membrane. In terms of biological role, probably involved in transport through the plasma membrane. This Eremothecium gossypii (strain ATCC 10895 / CBS 109.51 / FGSC 9923 / NRRL Y-1056) (Yeast) protein is Protein PNS1 (PNS1).